Consider the following 369-residue polypeptide: L-lactate oxidase (369 aa).

The 357-residue stretch at Glu-13–Tyr-369 folds into the FMN hydroxy acid dehydrogenase domain. Tyr-39 contacts pyruvate. FMN-binding positions include Pro-92–Ala-94, Ser-121, and Gln-143. Tyr-145 lines the pyruvate pocket. Thr-171 lines the FMN pocket. Arg-180 lines the pyruvate pocket. FMN is bound by residues Lys-240 and Ser-262. Positions 264 and 267 each coordinate pyruvate. The Proton acceptor role is filled by His-264. FMN is bound by residues Asp-295–Arg-299 and Arg-319.

It belongs to the FMN-dependent alpha-hydroxy acid dehydrogenase family. As to quaternary structure, homotetramer. The cofactor is FMN.

It catalyses the reaction (S)-lactate + O2 = pyruvate + H2O2. Catalyzes the oxidation of (S)-lactate (L-lactate) to pyruvate, with a reduction of O2 to H2O2. May be involved in the utilization of L-lactate as an energy source for growth. This is L-lactate oxidase from Lentilactobacillus hilgardii (strain ATCC 8290 / DSM 20176 / CCUG 30140 / JCM 1155 / KCTC 3500 / NBRC 15886 / NCIMB 8040 / NRRL B-1843 / 9).